A 298-amino-acid chain; its full sequence is Homoserine kinase (298 aa).

83-93 (PISRGLGSSSS) serves as a coordination point for ATP.

The protein belongs to the GHMP kinase family. Homoserine kinase subfamily.

Its subcellular location is the cytoplasm. It catalyses the reaction L-homoserine + ATP = O-phospho-L-homoserine + ADP + H(+). It functions in the pathway amino-acid biosynthesis; L-threonine biosynthesis; L-threonine from L-aspartate: step 4/5. In terms of biological role, catalyzes the ATP-dependent phosphorylation of L-homoserine to L-homoserine phosphate. This chain is Homoserine kinase, found in Clostridium botulinum (strain Eklund 17B / Type B).